Consider the following 574-residue polypeptide: Sodium/hydrogen exchanger 8 (574 aa).

11 helical membrane passes run 53-73, 77-97, 116-136, 149-169, 184-204, 254-274, 304-324, 347-367, 373-393, 410-430, and 444-464; these read MTIFFSLLVLAICIILVHLLI, LHFLPESVAVVSLGIIMGAFI, PNMFFLLLLPPIIFESGYSLH, LFSVFGTAISAFIVGGGIYFL, FAFGSLISAVDPVATIAIFNA, LGYFLKMFFGSAALGTLTGLI, GLAEGISLSGIMAILFSGIVM, VAFMCETCVFAFLGLSIFSFP, SFVIWCIVLVLFGRAVNIFPL, MFIMWFSGLRGAIPYALSLHL, and TTIIIVLFTVLLLGGGTMPLI.

This sequence belongs to the monovalent cation:proton antiporter 1 (CPA1) transporter (TC 2.A.36) family.

It is found in the golgi apparatus membrane. Involved in pH regulation to eliminate acids generated by active metabolism or to counter adverse environmental conditions. Major proton extruding system driven by the inward sodium ion chemical gradient. Plays an important role in signal transduction. The chain is Sodium/hydrogen exchanger 8 from Gallus gallus (Chicken).